Here is a 71-residue protein sequence, read N- to C-terminus: General transcription and DNA repair factor IIH subunit TFB5 (71 aa).

The protein belongs to the TFB5 family. In terms of assembly, component of the 7-subunit TFIIH core complex.

It localises to the nucleus. It is found in the chromosome. Functionally, component of the general transcription and DNA repair factor IIH (TFIIH) core complex, which is involved in general and transcription-coupled nucleotide excision repair (NER) of damaged DNA and in RNA transcription by RNA polymerase II. In NER, TFIIH acts by opening DNA around the lesion to allow the excision of the damaged oligonucleotide and its replacement by a new DNA fragment. In transcription, TFIIH has an essential role in transcription initiation. When the pre-initiation complex (PIC) has been established, TFIIH is required for promoter opening and promoter escape. Necessary for the stability of the TFIIH complex and for the presence of normal levels of TFIIH in the cell. Required for efficient binding of TFIIH to damaged DNA. Dispensable for normal development, but required when transcription is challenged. This Caenorhabditis elegans protein is General transcription and DNA repair factor IIH subunit TFB5.